The sequence spans 211 residues: Uracil phosphoribosyltransferase (211 aa).

5-phospho-alpha-D-ribose 1-diphosphate contacts are provided by residues arginine 81, arginine 106, and 133–141 (DPMLATGNS). Residues isoleucine 196 and 201 to 203 (GDA) contribute to the uracil site. Aspartate 202 is a 5-phospho-alpha-D-ribose 1-diphosphate binding site.

This sequence belongs to the UPRTase family. Requires Mg(2+) as cofactor.

It carries out the reaction UMP + diphosphate = 5-phospho-alpha-D-ribose 1-diphosphate + uracil. It functions in the pathway pyrimidine metabolism; UMP biosynthesis via salvage pathway; UMP from uracil: step 1/1. Allosterically activated by GTP. In terms of biological role, catalyzes the conversion of uracil and 5-phospho-alpha-D-ribose 1-diphosphate (PRPP) to UMP and diphosphate. This chain is Uracil phosphoribosyltransferase, found in Paracoccus denitrificans (strain Pd 1222).